We begin with the raw amino-acid sequence, 352 residues long: Phosphoribosylformylglycinamidine cyclo-ligase (352 aa).

Belongs to the AIR synthase family.

It is found in the cytoplasm. The catalysed reaction is 2-formamido-N(1)-(5-O-phospho-beta-D-ribosyl)acetamidine + ATP = 5-amino-1-(5-phospho-beta-D-ribosyl)imidazole + ADP + phosphate + H(+). Its pathway is purine metabolism; IMP biosynthesis via de novo pathway; 5-amino-1-(5-phospho-D-ribosyl)imidazole from N(2)-formyl-N(1)-(5-phospho-D-ribosyl)glycinamide: step 2/2. The protein is Phosphoribosylformylglycinamidine cyclo-ligase of Pseudomonas fluorescens (strain ATCC BAA-477 / NRRL B-23932 / Pf-5).